The sequence spans 201 residues: Peroxiredoxin prdx-2 (201 aa).

Residues 10-168 (AFIGKPAPQF…TLRLVQAFQF (159 aa)) enclose the Thioredoxin domain. Catalysis depends on Cys-55, which acts as the Cysteine sulfenic acid (-SOH) intermediate.

The protein belongs to the peroxiredoxin family. AhpC/Prx1 subfamily. As to quaternary structure, monomer and homodimer; disulfide-linked. Under nonstress conditions, present in the reduced monomeric form. Forms active hyperoxidized monomers and disulfide-linked homodimers upon oxidation by hydrogen peroxide. Forms active oxidized homodimers in response to the drug metformin. Post-translationally, the enzyme can be inactivated by further oxidation of the cysteine sulfenic acid (C(P)-SOH) to sulphinic acid (C(P)-SO2H) instead of its condensation to a disulfide bond. Expressed in the gonad, neurons and intestine (at protein level). Expressed in the pharyngeal inter-neuron I4 and the sensory interneuron I2. Expressed in the intestine, pharyngeal muscle 1, vulval muscle, body wall muscle, epithelial cells e1 and e3, and neurons in the head and tail.

Its subcellular location is the cytoplasm. It catalyses the reaction a hydroperoxide + [thioredoxin]-dithiol = an alcohol + [thioredoxin]-disulfide + H2O. Its activity is regulated as follows. Activated following oxidation of the conserved redox-active cysteine residue, which subsequently allows for the oxidation and activation of substrates. Functionally, thiol-specific peroxidase that catalyzes the reduction of hydrogen peroxide and organic hydroperoxides to water and alcohols, respectively. In I2 pharyngeal neurons, required for the inhibition of feeding in response to light and hydrogen peroxide. In the intestine, plays a role in protecting cells against oxidative stress by detoxifying peroxides such as hydrogen peroxide. In addition, plays a role in the recovery from oxidative stress induced by hydrogen peroxide. In its hyperoxidized form (induced by hydrogen peroxide), confers protection against heat stress. However, has a low tendency for overoxidation during the normal lifespan. Increases sensitivity to cytotoxicity caused by metalloids and heavy metals such as arsenic and cadmium by playing a role in inhibiting the expression of phase II detoxification genes such as gcs-1 in intestinal cells. In addition, in response to arsenite, promotes the secretion of the insulin ligand daf-28 into the pseudocoelom, which negatively regulates the activities of daf-16 and skn-1. Plays a role in promoting longevity. Plays a role in the mitohormetic pathway by promoting the activation of pmk-1 in response to the drug metformin. This is Peroxiredoxin prdx-2 from Caenorhabditis elegans.